We begin with the raw amino-acid sequence, 162 residues long: COP9 signalosome complex subunit 9 (162 aa).

The PCI domain occupies 6–118 (ETIKSLEDPY…SVSKSMKFSR (113 aa)).

Component of a COP9 signalosome-like (CSN) complex, composed of at least RRI1/CSN5, CSN9, RRI2/CSN10, PCI8/CSN11, CSN12 and CSI1. In the complex, it probably interacts directly with CSN12 and CSI1. Also interacts with RPN5.

It is found in the cytoplasm. The protein localises to the nucleus. Component of the COP9 signalosome (CSN) complex that acts as a regulator of the ubiquitin (Ubl) conjugation pathway by mediating the deneddylation of the cullin subunit of SCF-type E3 ubiquitin-protein ligase complexes. The CSN complex is involved in the regulation of the mating pheromone response. The polypeptide is COP9 signalosome complex subunit 9 (CSN9) (Saccharomyces cerevisiae (strain ATCC 204508 / S288c) (Baker's yeast)).